The primary structure comprises 205 residues: Adenylyl-sulfate kinase (205 aa).

31-38 (GLSGAGKS) lines the ATP pocket. The active-site Phosphoserine intermediate is the S105.

It belongs to the APS kinase family.

The enzyme catalyses adenosine 5'-phosphosulfate + ATP = 3'-phosphoadenylyl sulfate + ADP + H(+). It functions in the pathway sulfur metabolism; hydrogen sulfide biosynthesis; sulfite from sulfate: step 2/3. Its function is as follows. Catalyzes the synthesis of activated sulfate. This chain is Adenylyl-sulfate kinase, found in Shewanella baltica (strain OS195).